We begin with the raw amino-acid sequence, 119 residues long: UPF0738 protein BAA_1286 (119 aa).

The protein belongs to the UPF0738 family.

The protein is UPF0738 protein BAA_1286 of Bacillus anthracis (strain A0248).